A 186-amino-acid polypeptide reads, in one-letter code: Acireductone dioxygenase (186 aa).

The segment at 1–21 is disordered; that stretch reads MSRLSIFPDGSTSMDQSSPTP. Over residues 10–20 the composition is skewed to polar residues; it reads GSTSMDQSSPT. 4 residues coordinate Fe(2+): His-103, His-105, Glu-109, and His-147. Residues His-103, His-105, Glu-109, and His-147 each contribute to the Ni(2+) site.

This sequence belongs to the acireductone dioxygenase (ARD) family. Monomer. The cofactor is Fe(2+). Ni(2+) is required as a cofactor.

It catalyses the reaction 1,2-dihydroxy-5-(methylsulfanyl)pent-1-en-3-one + O2 = 3-(methylsulfanyl)propanoate + CO + formate + 2 H(+). It carries out the reaction 1,2-dihydroxy-5-(methylsulfanyl)pent-1-en-3-one + O2 = 4-methylsulfanyl-2-oxobutanoate + formate + 2 H(+). Its pathway is amino-acid biosynthesis; L-methionine biosynthesis via salvage pathway; L-methionine from S-methyl-5-thio-alpha-D-ribose 1-phosphate: step 5/6. Its function is as follows. Catalyzes 2 different reactions between oxygen and the acireductone 1,2-dihydroxy-3-keto-5-methylthiopentene (DHK-MTPene) depending upon the metal bound in the active site. Fe-containing acireductone dioxygenase (Fe-ARD) produces formate and 2-keto-4-methylthiobutyrate (KMTB), the alpha-ketoacid precursor of methionine in the methionine recycle pathway. Ni-containing acireductone dioxygenase (Ni-ARD) produces methylthiopropionate, carbon monoxide and formate, and does not lie on the methionine recycle pathway. The sequence is that of Acireductone dioxygenase from Synechococcus sp. (strain CC9902).